The chain runs to 223 residues: Cytidylate kinase (223 aa).

Gly-17–Thr-25 contributes to the ATP binding site.

It belongs to the cytidylate kinase family. Type 1 subfamily.

Its subcellular location is the cytoplasm. The catalysed reaction is CMP + ATP = CDP + ADP. It catalyses the reaction dCMP + ATP = dCDP + ADP. The protein is Cytidylate kinase of Bordetella pertussis (strain Tohama I / ATCC BAA-589 / NCTC 13251).